The primary structure comprises 195 residues: Dephospho-CoA kinase (195 aa).

Positions 3–195 constitute a DPCK domain; the sequence is IVGLTGGIGS…IALHENYLNH (193 aa). 11 to 16 is an ATP binding site; it reads GSGKSA.

It belongs to the CoaE family.

The protein localises to the cytoplasm. The enzyme catalyses 3'-dephospho-CoA + ATP = ADP + CoA + H(+). It participates in cofactor biosynthesis; coenzyme A biosynthesis; CoA from (R)-pantothenate: step 5/5. Catalyzes the phosphorylation of the 3'-hydroxyl group of dephosphocoenzyme A to form coenzyme A. This is Dephospho-CoA kinase from Acinetobacter baylyi (strain ATCC 33305 / BD413 / ADP1).